The primary structure comprises 250 residues: Endonuclease NucS 2 (250 aa).

The protein belongs to the NucS endonuclease family.

It localises to the cytoplasm. Cleaves both 3' and 5' ssDNA extremities of branched DNA structures. The chain is Endonuclease NucS 2 from Halobacterium salinarum (strain ATCC 700922 / JCM 11081 / NRC-1) (Halobacterium halobium).